Here is a 219-residue protein sequence, read N- to C-terminus: PKHD-type hydroxylase SYNPCC7002_A2658 (219 aa).

Positions 78 to 172 (TVHTLLFSRY…RLVAVGWVQS (95 aa)) constitute a Fe2OG dioxygenase domain. Fe cation-binding residues include H96, D98, and H153. R163 provides a ligand contact to 2-oxoglutarate.

It depends on Fe(2+) as a cofactor. Requires L-ascorbate as cofactor.

This is PKHD-type hydroxylase SYNPCC7002_A2658 from Picosynechococcus sp. (strain ATCC 27264 / PCC 7002 / PR-6) (Agmenellum quadruplicatum).